A 479-amino-acid chain; its full sequence is Aspartyl/glutamyl-tRNA(Asn/Gln) amidotransferase subunit B (479 aa).

Belongs to the GatB/GatE family. GatB subfamily. In terms of assembly, heterotrimer of A, B and C subunits.

The catalysed reaction is L-glutamyl-tRNA(Gln) + L-glutamine + ATP + H2O = L-glutaminyl-tRNA(Gln) + L-glutamate + ADP + phosphate + H(+). The enzyme catalyses L-aspartyl-tRNA(Asn) + L-glutamine + ATP + H2O = L-asparaginyl-tRNA(Asn) + L-glutamate + ADP + phosphate + 2 H(+). Its function is as follows. Allows the formation of correctly charged Asn-tRNA(Asn) or Gln-tRNA(Gln) through the transamidation of misacylated Asp-tRNA(Asn) or Glu-tRNA(Gln) in organisms which lack either or both of asparaginyl-tRNA or glutaminyl-tRNA synthetases. The reaction takes place in the presence of glutamine and ATP through an activated phospho-Asp-tRNA(Asn) or phospho-Glu-tRNA(Gln). This Geotalea daltonii (strain DSM 22248 / JCM 15807 / FRC-32) (Geobacter daltonii) protein is Aspartyl/glutamyl-tRNA(Asn/Gln) amidotransferase subunit B.